Reading from the N-terminus, the 416-residue chain is Gamma-glutamyl phosphate reductase (416 aa).

This sequence belongs to the gamma-glutamyl phosphate reductase family.

It is found in the cytoplasm. It carries out the reaction L-glutamate 5-semialdehyde + phosphate + NADP(+) = L-glutamyl 5-phosphate + NADPH + H(+). The protein operates within amino-acid biosynthesis; L-proline biosynthesis; L-glutamate 5-semialdehyde from L-glutamate: step 2/2. In terms of biological role, catalyzes the NADPH-dependent reduction of L-glutamate 5-phosphate into L-glutamate 5-semialdehyde and phosphate. The product spontaneously undergoes cyclization to form 1-pyrroline-5-carboxylate. The sequence is that of Gamma-glutamyl phosphate reductase from Salmonella agona (strain SL483).